Consider the following 520-residue polypeptide: Phospholipase C A (520 aa).

The tat-type signal signal peptide spans 1-38 (MSASPLLGMSRREFLTKLTGAGAAAFLMDWAAPVIEKA).

It belongs to the bacterial phospholipase C family. Post-translationally, predicted to be exported by the Tat system. The position of the signal peptide cleavage has not been experimentally proven.

It is found in the secreted. Its subcellular location is the cell wall. It carries out the reaction a 1,2-diacyl-sn-glycero-3-phosphocholine + H2O = phosphocholine + a 1,2-diacyl-sn-glycerol + H(+). Involved in virulence. Induces cytotoxic effects on mouse macrophage cell lines, via direct or indirect enzymatic hydrolysis of cell membrane phospholipids. Hydrolyzes phosphatidylcholine. This chain is Phospholipase C A, found in Mycobacterium tuberculosis (strain CDC 1551 / Oshkosh).